We begin with the raw amino-acid sequence, 54 residues long: Ductus ejaculatorius peptide 99B (54 aa).

Positions 1 to 21 (MKTPLFLLLVVLASLLGLALS) are cleaved as a signal peptide. Position 22 is a pyrrolidone carboxylic acid (Gln-22). N-linked (GlcNAc...) asparagine glycosylation occurs at Asn-25. A disulfide bond links Cys-40 and Cys-52. Positions 53–54 (RK) are excised as a propeptide.

The protein to paragonial peptide B. As to expression, ductus ejaculatorius.

The protein resides in the secreted. Induces post-mating responses; increased oviposition and reduced receptivity. This is Ductus ejaculatorius peptide 99B (Dup99B) from Drosophila melanogaster (Fruit fly).